The following is a 1018-amino-acid chain: Transmembrane protein 132A (1018 aa).

The signal sequence occupies residues 1–32; that stretch reads MTERKAAAPRGPYGAWFCLLVALALEVVRVSS. Residues 33–846 are Extracellular-facing; the sequence is NHDTLDPIYL…VTDLELGMYA (814 aa). An N-linked (GlcNAc...) asparagine glycan is attached at N276. The binds to HSPA5/GRP78 stretch occupies residues 606-911; it reads IEVRSPLSDA…QLDRCSSSGP (306 aa). The tract at residues 666–1018 is confers cellular localization similar to full-length form; sequence LPAPKQEVAL…NYMERIRGSS (353 aa). A compositionally biased stretch (basic and acidic residues) spans 807–818; sequence ERAEEEAGKEEN. Residues 807–833 are disordered; sequence ERAEEEAGKEENEAKEEEEDEEEMVPA. A compositionally biased stretch (acidic residues) spans 819–830; it reads EAKEEEEDEEEM. Residues 847–867 traverse the membrane as a helical segment; sequence LLGIFCLAILIFLVNGVVFVL. Residues 868 to 1018 lie on the Cytoplasmic side of the membrane; that stretch reads RYQRKEPPDS…NYMERIRGSS (151 aa). The tract at residues 900-956 is disordered; the sequence is SRQLDRCSSSGPPKGEGGCPCESGAGGDASTVAPSASESPAGSSSTLARKEAGGRRK. Low complexity-rich tracts occupy residues 906–922 and 932–944; these read CSSS…PCES and APSA…GSSS.

This sequence belongs to the TMEM132 family. Interacts with HSPA5/GRP78.

The protein resides in the golgi apparatus membrane. Its subcellular location is the endoplasmic reticulum membrane. Its function is as follows. May play a role in embryonic and postnatal development of the brain. Increased resistance to cell death induced by serum starvation in cultured cells. Regulates cAMP-induced GFAP gene expression via STAT3 phosphorylation. The chain is Transmembrane protein 132A (Tmem132a) from Mus musculus (Mouse).